The chain runs to 133 residues: Heat shock protein 15 (133 aa).

The region spanning 9–71 (VRLDKWLWAA…DERTVIVKAI (63 aa)) is the S4 RNA-binding domain. The disordered stretch occupies residues 105–133 (NALTMPHPDRRPDKKERRDLLRFKHGDSE). Residues 111 to 133 (HPDRRPDKKERRDLLRFKHGDSE) show a composition bias toward basic and acidic residues.

Belongs to the HSP15 family. As to quaternary structure, monomer.

In terms of biological role, involved in the recycling of free 50S ribosomal subunits that still carry a nascent chain. Binds RNA more specifically than DNA. Binds with very high affinity to the free 50S ribosomal subunit. Does not bind it when it is part of the 70S ribosome. In Escherichia coli O157:H7, this protein is Heat shock protein 15 (hslR).